A 208-amino-acid polypeptide reads, in one-letter code: N-(5'-phosphoribosyl)anthranilate isomerase (208 aa).

It belongs to the TrpF family.

It carries out the reaction N-(5-phospho-beta-D-ribosyl)anthranilate = 1-(2-carboxyphenylamino)-1-deoxy-D-ribulose 5-phosphate. The protein operates within amino-acid biosynthesis; L-tryptophan biosynthesis; L-tryptophan from chorismate: step 3/5. This Neisseria gonorrhoeae (strain ATCC 700825 / FA 1090) protein is N-(5'-phosphoribosyl)anthranilate isomerase.